The following is a 630-amino-acid chain: Cyclin-T1-2 (630 aa).

Over residues 288–297 (QSSLSVSSSS) the composition is skewed to low complexity. Disordered stretches follow at residues 288–313 (QSSL…DSSQ) and 410–439 (RSGD…VEPP). A compositionally biased stretch (polar residues) spans 421–439 (GGSSLTDVDSKSTQSVEPP).

This sequence belongs to the cyclin family. Cyclin T subfamily.

This is Cyclin-T1-2 (CYCT1_2) from Oryza sativa subsp. japonica (Rice).